A 548-amino-acid chain; its full sequence is Glucose-6-phosphate isomerase (548 aa).

The active-site Proton donor is the E355. Catalysis depends on residues H386 and K511.

The protein belongs to the GPI family.

Its subcellular location is the cytoplasm. The catalysed reaction is alpha-D-glucose 6-phosphate = beta-D-fructose 6-phosphate. It functions in the pathway carbohydrate biosynthesis; gluconeogenesis. It participates in carbohydrate degradation; glycolysis; D-glyceraldehyde 3-phosphate and glycerone phosphate from D-glucose: step 2/4. Its function is as follows. Catalyzes the reversible isomerization of glucose-6-phosphate to fructose-6-phosphate. This chain is Glucose-6-phosphate isomerase, found in Wigglesworthia glossinidia brevipalpis.